The sequence spans 76 residues: RNA-binding protein KhpA (76 aa).

The region spanning 29–76 (QNIIELRVSPKDVGKVIGKNGRIAKSLRAILTAASVKAGKNFSLEIID) is the KH domain.

This sequence belongs to the KhpA RNA-binding protein family. As to quaternary structure, forms a complex with KhpB.

The protein localises to the cytoplasm. In terms of biological role, a probable RNA chaperone. Forms a complex with KhpB which binds to cellular RNA and controls its expression. Plays a role in peptidoglycan (PG) homeostasis and cell length regulation. The sequence is that of RNA-binding protein KhpA from Leptospira interrogans serogroup Icterohaemorrhagiae serovar copenhageni (strain Fiocruz L1-130).